Reading from the N-terminus, the 151-residue chain is Small ribosomal subunit protein bS6 (151 aa).

Residues 98 to 151 (EESPIQKAEKENRERKNRAERRAAEAAAATETEKSESEESAEEETSTDTTGEEE) are disordered. Positions 135 to 151 (EESAEEETSTDTTGEEE) are enriched in acidic residues.

Belongs to the bacterial ribosomal protein bS6 family.

Binds together with bS18 to 16S ribosomal RNA. The chain is Small ribosomal subunit protein bS6 from Teredinibacter turnerae (strain ATCC 39867 / T7901).